Reading from the N-terminus, the 226-residue chain is ATP synthase subunit a (226 aa).

6 helical membrane-spanning segments follow: residues 18-38, 79-99, 105-125, 134-154, 179-199, and 201-221; these read FITG…SLGA, LAGT…IPGF, SWSF…FEGI, FAHF…IEII, LIML…VLFF, and GILQ…GAVL.

It belongs to the ATPase A chain family. As to quaternary structure, F-type ATPases have 2 components, CF(1) - the catalytic core - and CF(0) - the membrane proton channel. CF(1) has five subunits: alpha(3), beta(3), gamma(1), delta(1), epsilon(1). CF(0) has three main subunits: a(1), b(2) and c(9-12). The alpha and beta chains form an alternating ring which encloses part of the gamma chain. CF(1) is attached to CF(0) by a central stalk formed by the gamma and epsilon chains, while a peripheral stalk is formed by the delta and b chains.

The protein resides in the cell inner membrane. Its function is as follows. Key component of the proton channel; it plays a direct role in the translocation of protons across the membrane. The sequence is that of ATP synthase subunit a from Helicobacter pylori (strain J99 / ATCC 700824) (Campylobacter pylori J99).